The following is a 122-amino-acid chain: ATP-dependent Clp protease adapter protein ClpS (122 aa).

The interval 1–33 (MHAPSQIRLTFNQDHPEPHEHEDEGAGLAVQES) is disordered. Residues 14–24 (DHPEPHEHEDE) show a composition bias toward basic and acidic residues.

Belongs to the ClpS family. Binds to the N-terminal domain of the chaperone ClpA.

Functionally, involved in the modulation of the specificity of the ClpAP-mediated ATP-dependent protein degradation. The polypeptide is ATP-dependent Clp protease adapter protein ClpS (Pseudomonas aeruginosa (strain ATCC 15692 / DSM 22644 / CIP 104116 / JCM 14847 / LMG 12228 / 1C / PRS 101 / PAO1)).